Consider the following 196-residue polypeptide: uncharacterized protein (196 aa).

It is found in the mitochondrion. This is an uncharacterized protein from Paramecium tetraurelia.